Consider the following 95-residue polypeptide: Co-chaperonin GroES (95 aa).

The protein belongs to the GroES chaperonin family. In terms of assembly, heptamer of 7 subunits arranged in a ring. Interacts with the chaperonin GroEL.

Its subcellular location is the cytoplasm. Together with the chaperonin GroEL, plays an essential role in assisting protein folding. The GroEL-GroES system forms a nano-cage that allows encapsulation of the non-native substrate proteins and provides a physical environment optimized to promote and accelerate protein folding. GroES binds to the apical surface of the GroEL ring, thereby capping the opening of the GroEL channel. The protein is Co-chaperonin GroES of Chlorobium phaeovibrioides (strain DSM 265 / 1930) (Prosthecochloris vibrioformis (strain DSM 265)).